The primary structure comprises 935 residues: Coiled-coil domain-containing protein 66 (935 aa).

Residues 76-96 (LDTSQAKPENSRLTFSPSTDK) are compositionally biased toward polar residues. The tract at residues 76–103 (LDTSQAKPENSRLTFSPSTDKQYSEKDS) is disordered. A Phosphothreonine modification is found at threonine 114. A Phosphoserine modification is found at serine 366. Residues 462–555 (LEHQKAIMAQ…EQRIRELAQK (94 aa)) are a coiled coil. Disordered regions lie at residues 470–491 (AQVE…KEEQ), 577–602 (TISS…DTGV), and 738–794 (ENLS…RTQQ). Residues 473–491 (EENRRKKRLEEEQRKKEEQ) show a composition bias toward basic and acidic residues. Positions 567–935 (GAQVDYKAFT…NQEDNFSSSF (369 aa)) are mediates localization to cilia, centrosomes and spindle microtubules and the interaction with PCM1, CEP290, CEP104 and CSPP1. A compositionally biased stretch (polar residues) spans 590–602 (DTSTASPKKDTGV). Serine 595 carries the phosphoserine modification. Over residues 752–782 (SHRETESESRLHLIKKVEEPLKTPSVSKERF) the composition is skewed to basic and acidic residues. Polar residues predominate over residues 783-794 (QTSPAVKNRTQQ).

As to quaternary structure, homodimer; disulfide-linked. Interacts with CEP290. Interacts with PCM1. Interacts with ARMC9, TOGARAM1, CSPP1 and CEP104. Interacts with CDK5RAP2, CEP152, CEP192, TBG1 and PRC1. As to expression, widely expressed. Expressed in retina by rod photoreceptors but also detected in outer plexiform and ganglion cell layers (at protein level).

It is found in the cytoplasm. Its subcellular location is the cytoskeleton. The protein localises to the microtubule organizing center. The protein resides in the centrosome. It localises to the centriolar satellite. It is found in the cell projection. Its subcellular location is the cilium. The protein localises to the cilium basal body. The protein resides in the cilium axoneme. It localises to the photoreceptor inner segment. It is found in the photoreceptor outer segment. Functionally, microtubule-binding protein required for ciliogenesis. May function in ciliogenesis by mediating the transport of proteins like BBS4 to the cilium, but also through the organization of the centriolar satellites. Required for the assembly of signaling-competent cilia with proper structure and length. Mediates this function in part by regulating transition zone assembly and basal body recruitment of the IFT-B complex. Cooperates with the ciliopathy proteins CSPP1 and CEP104 during cilium length regulation. Plays two important roles during cell division. First, is required for mitotic progression via regulation of spindle assembly, organization and orientation, levels of spindle microtubules (MTs), kinetochore-fiber integrity, and chromosome alignment. Second, functions during cytokinesis in part by regulating assembly and organization of central spindle and midbody MTs. Plays a role in retina morphogenesis and/or homeostasis. The sequence is that of Coiled-coil domain-containing protein 66 from Mus musculus (Mouse).